We begin with the raw amino-acid sequence, 83 residues long: Cytochrome c6 (83 aa).

Cysteine 14, cysteine 17, and histidine 18 together coordinate heme c. An N6-methyllysine; partial modification is found at lysine 24. Methionine 59 is a binding site for heme c.

This sequence belongs to the cytochrome c family. PetJ subfamily. In terms of assembly, monomer. In terms of processing, binds 1 heme c group covalently per subunit. 50% of the molecules were found to be monomethylated at Lys-24.

It localises to the plastid. The protein localises to the chloroplast thylakoid lumen. In terms of biological role, functions as an electron carrier between membrane-bound cytochrome b6-f and photosystem I in oxygenic photosynthesis. This chain is Cytochrome c6 (petJ), found in Diacronema lutheri (Unicellular marine alga).